A 412-amino-acid chain; its full sequence is Early growth response protein 2b (412 aa).

The tract at residues 269–299 (YTPQNLPLRPILRPRKYPNRPSKTPVHERPY) is disordered. C2H2-type zinc fingers lie at residues 299 to 323 (YPCP…IRIH), 329 to 351 (FQCR…IRTH), and 357 to 379 (FACD…TKIH). Positions 371-412 (ERKRHTKIHLRQKERKSSSSSTGVSSSERGVATSICSSSSNQ) are disordered. Over residues 374 to 384 (RHTKIHLRQKE) the composition is skewed to basic residues. Over residues 388-401 (SSSSTGVSSSERGV) the composition is skewed to low complexity.

This sequence belongs to the EGR C2H2-type zinc-finger protein family.

Its subcellular location is the nucleus. In terms of biological role, sequence-specific DNA-binding transcription factor. Binds to two specific DNA sites located in the promoter region of HOXA4. This Danio rerio (Zebrafish) protein is Early growth response protein 2b (egr2b).